The sequence spans 939 residues: Vacuolar membrane protease (939 aa).

Over 1-11 (MGFNSIFKFRK) the chain is Cytoplasmic. The helical transmembrane segment at 12-32 (TSLSLLLFAVYFIIGILYFID) threads the bilayer. The Vacuolar portion of the chain corresponds to 33–356 (KTRYKHSLPI…TFVAIPSTKL (324 aa)). N-linked (GlcNAc...) asparagine glycans are attached at residues asparagine 59, asparagine 88, and asparagine 114. Residues histidine 149 and aspartate 161 each coordinate Zn(2+). Glutamate 193 acts as the Proton acceptor in catalysis. Zn(2+)-binding residues include glutamate 194, glutamate 219, and histidine 293. N-linked (GlcNAc...) asparagine glycosylation occurs at asparagine 326. Residues 357–377 (FWINIALLIIMPIISIFLFSI) traverse the membrane as a helical segment. Over 378 to 388 (VKKYNNEIIDS) the chain is Cytoplasmic. Residues 389-409 (GNIWWRLPISAMSSGTIIIFT) traverse the membrane as a helical segment. The Vacuolar segment spans residues 410–424 (TKLIMKWNPYILSRN). Residues 425–445 (FLLPLIGLTFEFIILNSYILT) traverse the membrane as a helical segment. Residues 446-453 (MFENLSSS) lie on the Cytoplasmic side of the membrane. A helical transmembrane segment spans residues 454 to 474 (FDFKTIAINEISFLFWIVLAY). The Vacuolar segment spans residues 475-491 (QTWKLYDNNYQNTGIYP). Residues 492–512 (FTICYIVMATAGNIGYLFLIF) traverse the membrane as a helical segment. Residues 513 to 588 (KNIEIVEDEE…NQRTILKESK (76 aa)) are Cytoplasmic-facing. The segment covering 540–552 (YRDEINGRDDSSR) has biased composition (basic and acidic residues). The segment at 540–561 (YRDEINGRDDSSRDSNSASIPT) is disordered. A helical transmembrane segment spans residues 589–609 (LVYNYDWIIEFLLVVPFSTFL). Over 610–636 (LYNSLELIMDAVNQTIQETGDLYKVYK) the chain is Vacuolar. A glycan (N-linked (GlcNAc...) asparagine) is linked at asparagine 622. Residues 637-657 (ILAIGSILISIPTLPFAYKIG) traverse the membrane as a helical segment. Residues 658 to 663 (CQLGKT) lie on the Cytoplasmic side of the membrane. A helical membrane pass occupies residues 664 to 684 (LTFISIGCLLISMALAPFTEM). Residues 685 to 939 (NPIKFRFMQV…LVKLTEAMVL (255 aa)) lie on the Vacuolar side of the membrane. Residues asparagine 810 and asparagine 820 are each glycosylated (N-linked (GlcNAc...) asparagine).

Belongs to the peptidase M28 family. The cofactor is Zn(2+).

Its subcellular location is the vacuole membrane. In terms of biological role, may be involved in vacuolar sorting and osmoregulation. In Vanderwaltozyma polyspora (strain ATCC 22028 / DSM 70294 / BCRC 21397 / CBS 2163 / NBRC 10782 / NRRL Y-8283 / UCD 57-17) (Kluyveromyces polysporus), this protein is Vacuolar membrane protease.